Reading from the N-terminus, the 304-residue chain is Acetyl-coenzyme A carboxylase carboxyl transferase subunit beta (304 aa).

The 270-residue stretch at 23-292 (VWTKCDSCGQ…PNPDAPREGE (270 aa)) folds into the CoA carboxyltransferase N-terminal domain. Residues Cys-27, Cys-30, Cys-46, and Cys-49 each coordinate Zn(2+). A C4-type zinc finger spans residues 27–49 (CDSCGQVLYRAELERNLEVCPKC). Residues 281–304 (PAPNPDAPREGEVVPPVPDQEPEA) are disordered. Pro residues predominate over residues 295–304 (PPVPDQEPEA).

This sequence belongs to the AccD/PCCB family. In terms of assembly, acetyl-CoA carboxylase is a heterohexamer composed of biotin carboxyl carrier protein (AccB), biotin carboxylase (AccC) and two subunits each of ACCase subunit alpha (AccA) and ACCase subunit beta (AccD). The cofactor is Zn(2+).

Its subcellular location is the cytoplasm. The catalysed reaction is N(6)-carboxybiotinyl-L-lysyl-[protein] + acetyl-CoA = N(6)-biotinyl-L-lysyl-[protein] + malonyl-CoA. The protein operates within lipid metabolism; malonyl-CoA biosynthesis; malonyl-CoA from acetyl-CoA: step 1/1. Its function is as follows. Component of the acetyl coenzyme A carboxylase (ACC) complex. Biotin carboxylase (BC) catalyzes the carboxylation of biotin on its carrier protein (BCCP) and then the CO(2) group is transferred by the transcarboxylase to acetyl-CoA to form malonyl-CoA. The protein is Acetyl-coenzyme A carboxylase carboxyl transferase subunit beta of Citrobacter koseri (strain ATCC BAA-895 / CDC 4225-83 / SGSC4696).